Here is a 194-residue protein sequence, read N- to C-terminus: Crossover junction endodeoxyribonuclease RuvC (194 aa).

Residues D8, E72, and D144 contribute to the active site. The Mg(2+) site is built by D8, E72, and D144.

Belongs to the RuvC family. In terms of assembly, homodimer which binds Holliday junction (HJ) DNA. The HJ becomes 2-fold symmetrical on binding to RuvC with unstacked arms; it has a different conformation from HJ DNA in complex with RuvA. In the full resolvosome a probable DNA-RuvA(4)-RuvB(12)-RuvC(2) complex forms which resolves the HJ. The cofactor is Mg(2+).

It localises to the cytoplasm. It carries out the reaction Endonucleolytic cleavage at a junction such as a reciprocal single-stranded crossover between two homologous DNA duplexes (Holliday junction).. In terms of biological role, the RuvA-RuvB-RuvC complex processes Holliday junction (HJ) DNA during genetic recombination and DNA repair. Endonuclease that resolves HJ intermediates. Cleaves cruciform DNA by making single-stranded nicks across the HJ at symmetrical positions within the homologous arms, yielding a 5'-phosphate and a 3'-hydroxyl group; requires a central core of homology in the junction. The consensus cleavage sequence is 5'-(A/T)TT(C/G)-3'. Cleavage occurs on the 3'-side of the TT dinucleotide at the point of strand exchange. HJ branch migration catalyzed by RuvA-RuvB allows RuvC to scan DNA until it finds its consensus sequence, where it cleaves and resolves the cruciform DNA. This is Crossover junction endodeoxyribonuclease RuvC from Psychrobacter sp. (strain PRwf-1).